Here is a 431-residue protein sequence, read N- to C-terminus: Histidinol dehydrogenase (431 aa).

NAD(+) contacts are provided by Tyr127, Gln185, and Asn208. Residues Ser234, Gln256, and His259 each contribute to the substrate site. Zn(2+) contacts are provided by Gln256 and His259. Residues Glu323 and His324 each act as proton acceptor in the active site. His324, Asp357, Glu411, and His416 together coordinate substrate. Asp357 serves as a coordination point for Zn(2+). Residue His416 coordinates Zn(2+).

It belongs to the histidinol dehydrogenase family. The cofactor is Zn(2+).

It carries out the reaction L-histidinol + 2 NAD(+) + H2O = L-histidine + 2 NADH + 3 H(+). It functions in the pathway amino-acid biosynthesis; L-histidine biosynthesis; L-histidine from 5-phospho-alpha-D-ribose 1-diphosphate: step 9/9. In terms of biological role, catalyzes the sequential NAD-dependent oxidations of L-histidinol to L-histidinaldehyde and then to L-histidine. The protein is Histidinol dehydrogenase of Vibrio cholerae serotype O1 (strain ATCC 39315 / El Tor Inaba N16961).